A 179-amino-acid chain; its full sequence is MARFSPMMLLPVAIFAGFAGLSGWALLRDDPDALPSAMIGREAPSVGEATLPGKVQLTDEMLRQPGVKLVNFWASWCPPCRAEHPTLTELSARLPVYGVDLKDPEGAALGFLSEHGDPFHALAADPRGRVAIDWGVTAPPETFIIDGSGRILHRHAGPLVREDYTNRFLPELEKALAAE.

The N-terminal stretch at 1 to 25 (MARFSPMMLLPVAIFAGFAGLSGWA) is a signal peptide. A Thioredoxin domain is found at 37 to 174 (AMIGREAPSV…TNRFLPELEK (138 aa)). Cys-77 and Cys-80 are joined by a disulfide.

This sequence belongs to the thioredoxin family. DsbE subfamily.

Its subcellular location is the periplasm. Required for disulfide bond formation in some periplasmic proteins. Also acts as a disulfide oxidoreductase in cytochromes c biogenesis. The cysteines of apocytochromes c must be in the reduced state for covalent linkage between the two moieties to occur. The protein is Thiol:disulfide interchange protein DsbE homolog (ccmG) of Paracoccus denitrificans (strain Pd 1222).